A 176-amino-acid polypeptide reads, in one-letter code: NAD(P)H-quinone oxidoreductase subunit 6, chloroplastic (176 aa).

Helical transmembrane passes span 10 to 30 (FLLV…VLLT), 32 to 52 (PIYS…FYIL), 61 to 81 (AQLL…VMFM), 92 to 112 (LWTV…VSLM), and 152 to 172 (FFLP…GAIA).

The protein belongs to the complex I subunit 6 family. NDH is composed of at least 16 different subunits, 5 of which are encoded in the nucleus.

Its subcellular location is the plastid. It localises to the chloroplast thylakoid membrane. It carries out the reaction a plastoquinone + NADH + (n+1) H(+)(in) = a plastoquinol + NAD(+) + n H(+)(out). The enzyme catalyses a plastoquinone + NADPH + (n+1) H(+)(in) = a plastoquinol + NADP(+) + n H(+)(out). In terms of biological role, NDH shuttles electrons from NAD(P)H:plastoquinone, via FMN and iron-sulfur (Fe-S) centers, to quinones in the photosynthetic chain and possibly in a chloroplast respiratory chain. The immediate electron acceptor for the enzyme in this species is believed to be plastoquinone. Couples the redox reaction to proton translocation, and thus conserves the redox energy in a proton gradient. The polypeptide is NAD(P)H-quinone oxidoreductase subunit 6, chloroplastic (ndhG) (Eucalyptus globulus subsp. globulus (Tasmanian blue gum)).